We begin with the raw amino-acid sequence, 82 residues long: DNA-directed RNA polymerase subunit omega (82 aa).

This sequence belongs to the RNA polymerase subunit omega family. The RNAP catalytic core consists of 2 alpha, 1 beta, 1 beta' and 1 omega subunit. When a sigma factor is associated with the core the holoenzyme is formed, which can initiate transcription.

It catalyses the reaction RNA(n) + a ribonucleoside 5'-triphosphate = RNA(n+1) + diphosphate. Promotes RNA polymerase assembly. Latches the N- and C-terminal regions of the beta' subunit thereby facilitating its interaction with the beta and alpha subunits. The chain is DNA-directed RNA polymerase subunit omega from Lacticaseibacillus casei (strain BL23) (Lactobacillus casei).